A 217-amino-acid chain; its full sequence is Somatotropin (217 aa).

Positions 1–26 (MMAAGPRTSLLLAFALLCLPWTQVVG) are cleaved as a signal peptide. His46 serves as a coordination point for Zn(2+). Cysteines 79 and 190 form a disulfide. Ser132 carries the post-translational modification Phosphoserine. Glu199 contributes to the Zn(2+) binding site. The cysteines at positions 207 and 215 are disulfide-linked.

The protein belongs to the somatotropin/prolactin family.

It is found in the secreted. Plays an important role in growth control. Its major role in stimulating body growth is to stimulate the liver and other tissues to secrete IGF1. It stimulates both the differentiation and proliferation of myoblasts. It also stimulates amino acid uptake and protein synthesis in muscle and other tissues. This chain is Somatotropin (GH1), found in Bos taurus (Bovine).